Here is a 1132-residue protein sequence, read N- to C-terminus: Major DNA-binding protein (1132 aa).

Residues 1103-1132 (VEELFPSPGVPSLTVGKKRKIASLLSDLDL) are required for nuclear localization.

The protein belongs to the herpesviridae major DNA-binding protein family. In terms of assembly, homooligomers. Forms double-helical filaments necessary for the formation of replication compartments within the host nucleus. Interacts with the origin-binding protein. Interacts with the helicase primase complex; this interaction stimulates primer synthesis activity of the helicase-primase complex. Interacts with the DNA polymerase. Interacts with the alkaline exonuclease; this interaction increases its nuclease processivity.

The protein resides in the host nucleus. Plays several crucial roles in viral infection. Participates in the opening of the viral DNA origin to initiate replication by interacting with the origin-binding protein. May disrupt loops, hairpins and other secondary structures present on ssDNA to reduce and eliminate pausing of viral DNA polymerase at specific sites during elongation. Promotes viral DNA recombination by performing strand-transfer, characterized by the ability to transfer a DNA strand from a linear duplex to a complementary single-stranded DNA circle. Can also catalyze the renaturation of complementary single strands. Additionally, reorganizes the host cell nucleus, leading to the formation of prereplicative sites and replication compartments. This process is driven by the protein which can form double-helical filaments in the absence of DNA. The protein is Major DNA-binding protein of Human herpesvirus 8 type P (isolate GK18) (HHV-8).